We begin with the raw amino-acid sequence, 300 residues long: Fluorinase (300 aa).

S-adenosyl-L-methionine-binding positions include Asp-16, 21–23, Tyr-77, Ser-158, Asp-211, Asn-216, 270–271, and 278–280; these read DDS, SR, and RNA.

Belongs to the SAM hydrolase / SAM-dependent halogenase family. In terms of assembly, homohexamer.

The enzyme catalyses fluoride + S-adenosyl-L-methionine = 5'-deoxy-5'-fluoroadenosine + L-methionine. It catalyses the reaction chloride + S-adenosyl-L-methionine = 5'-chloro-5'-deoxyadenosine + L-methionine. With respect to regulation, activity is severely inhibited by 1 mM Cu(2+) or Zn(2+). Functionally, catalyzes the formation of a C-F bond by combining S-adenosyl-L-methionine (SAM) and fluoride to generate 5'-fluoro-5'-deoxyadenosine (5'-FDA) and L-methionine. Probably involved in fluoroacetate (FAc) and 4-fluorothreonine (4-FT) biosynthesis. In vitro, can also catalyze the conversion of chloride and SAM to 5'-chloro-5'-deoxyadenosine (5'-CIDA) and L-methionine in the presence of L-amino acid oxidase. In Nocardia brasiliensis (strain ATCC 700358 / HUJEG-1), this protein is Fluorinase.